The primary structure comprises 477 residues: MFKNAFANLQKVGKSLMLPVSVLPIAGILLGVGSANFSWLPAVVSHVMAEAGGSVFANMPLIFAIGVALGFTNNDGVSALAAVVAYGIMVKTMAVVAPLVLHLPAEEIAAKHLADTGVLGGIISGAIAAYMFNRFYRIKLPEYLGFFAGKRFVPIISGLAAIFTGVVLSFVWPPIGTAIQAFSQWAAYQNPVVAFGIYGFIERCLVPFGLHHIWNVPFQMQIGEYTNAAGQVFHGDIPRYMAGDPTAGMLSGGFLFKMYGLPAAAIAIWHSAKPENRAKVGGIMISAALTSFLTGITEPIEFSFMFVAPILYIIHAILAGLAFPICILLGMRDGTSFSHGLIDFIVLSGNSSKLWLFPIVGAGYAIVYYTVFRVLIKALDLKTPGREDTTDDAKAGATSEMAPALVAAFGGKENITNLDACITRLRVSVADVAKVDQAGLKKLGAAGVVVAGSGVQAIFGTKSDNLKTEMDEYIRNS.

Over 1–14 (MFKNAFANLQKVGK) the chain is Cytoplasmic. The PTS EIIC type-1 domain maps to 1-388 (MFKNAFANLQ…LDLKTPGRED (388 aa)). Residues 15 to 35 (SLMLPVSVLPIAGILLGVGSA) form a helical membrane-spanning segment. The Periplasmic portion of the chain corresponds to 36–50 (NFSWLPAVVSHVMAE). The helical transmembrane segment at 51 to 71 (AGGSVFANMPLIFAIGVALGF) threads the bilayer. The Cytoplasmic portion of the chain corresponds to 72-79 (TNNDGVSA). A helical membrane pass occupies residues 80–100 (LAAVVAYGIMVKTMAVVAPLV). Topologically, residues 101-111 (LHLPAEEIAAK) are periplasmic. The helical transmembrane segment at 112 to 132 (HLADTGVLGGIISGAIAAYMF) threads the bilayer. Topologically, residues 133-151 (NRFYRIKLPEYLGFFAGKR) are cytoplasmic. A helical transmembrane segment spans residues 152-172 (FVPIISGLAAIFTGVVLSFVW). At 173–190 (PPIGTAIQAFSQWAAYQN) the chain is on the periplasmic side. A helical transmembrane segment spans residues 191–211 (PVVAFGIYGFIERCLVPFGLH). The Cytoplasmic portion of the chain corresponds to 212-248 (HIWNVPFQMQIGEYTNAAGQVFHGDIPRYMAGDPTAG). The helical transmembrane segment at 249–269 (MLSGGFLFKMYGLPAAAIAIW) threads the bilayer. Over 270–279 (HSAKPENRAK) the chain is Periplasmic. The helical transmembrane segment at 280–300 (VGGIMISAALTSFLTGITEPI) threads the bilayer. Residues 301 to 309 (EFSFMFVAP) are Cytoplasmic-facing. Residues 310–330 (ILYIIHAILAGLAFPICILLG) traverse the membrane as a helical segment. At 331-355 (MRDGTSFSHGLIDFIVLSGNSSKLW) the chain is on the periplasmic side. A helical transmembrane segment spans residues 356 to 376 (LFPIVGAGYAIVYYTVFRVLI). Over 377–477 (KALDLKTPGR…TEMDEYIRNS (101 aa)) the chain is Cytoplasmic. The region spanning 399–477 (SEMAPALVAA…TEMDEYIRNS (79 aa)) is the PTS EIIB type-1 domain. Cys-421 (phosphocysteine intermediate; for EIIB activity) is an active-site residue. Cys-421 carries the phosphocysteine modification.

The protein resides in the cell inner membrane. The enzyme catalyses N(pros)-phospho-L-histidyl-[protein] + D-glucose(out) = D-glucose 6-phosphate(in) + L-histidyl-[protein]. Its function is as follows. The phosphoenolpyruvate-dependent sugar phosphotransferase system (sugar PTS), a major carbohydrate active transport system, catalyzes the phosphorylation of incoming sugar substrates concomitantly with their translocation across the cell membrane. The enzyme II complex composed of PtsG and Crr is involved in glucose transport. Also functions as a chemoreceptor monitoring the environment for changes in sugar concentration. It can also phosphorylate mannose, methyl alpha-glucoside and 2-deoxy-glucose. This Salmonella typhimurium (strain LT2 / SGSC1412 / ATCC 700720) protein is PTS system glucose-specific EIICB component (ptsG).